Reading from the N-terminus, the 465-residue chain is Na(+)-translocating NADH-quinone reductase subunit A (465 aa).

The protein belongs to the NqrA family. As to quaternary structure, composed of six subunits; NqrA, NqrB, NqrC, NqrD, NqrE and NqrF.

It carries out the reaction a ubiquinone + n Na(+)(in) + NADH + H(+) = a ubiquinol + n Na(+)(out) + NAD(+). Functionally, NQR complex catalyzes the reduction of ubiquinone-1 to ubiquinol by two successive reactions, coupled with the transport of Na(+) ions from the cytoplasm to the periplasm. NqrA to NqrE are probably involved in the second step, the conversion of ubisemiquinone to ubiquinol. The protein is Na(+)-translocating NADH-quinone reductase subunit A of Chlamydia muridarum (strain MoPn / Nigg).